Here is a 34-residue protein sequence, read N- to C-terminus: Brevinin-2Rf (34 aa).

A disulfide bond links cysteine 28 and cysteine 34.

As to expression, expressed by the skin glands.

It is found in the secreted. Functionally, antimicrobial peptide. In Pelophylax ridibundus (Marsh frog), this protein is Brevinin-2Rf.